Consider the following 281-residue polypeptide: Bifunctional protein FolD (281 aa).

Residues 165-167 (GRS) and Ser190 contribute to the NADP(+) site.

Belongs to the tetrahydrofolate dehydrogenase/cyclohydrolase family. In terms of assembly, homodimer.

The catalysed reaction is (6R)-5,10-methylene-5,6,7,8-tetrahydrofolate + NADP(+) = (6R)-5,10-methenyltetrahydrofolate + NADPH. It catalyses the reaction (6R)-5,10-methenyltetrahydrofolate + H2O = (6R)-10-formyltetrahydrofolate + H(+). The protein operates within one-carbon metabolism; tetrahydrofolate interconversion. Catalyzes the oxidation of 5,10-methylenetetrahydrofolate to 5,10-methenyltetrahydrofolate and then the hydrolysis of 5,10-methenyltetrahydrofolate to 10-formyltetrahydrofolate. This is Bifunctional protein FolD from Polaromonas sp. (strain JS666 / ATCC BAA-500).